Here is a 386-residue protein sequence, read N- to C-terminus: Lycopene beta-cyclase (386 aa).

3 to 33 serves as a coordination point for NAD(+); the sequence is DLILVGGGLANGLIAWRLRQRYPQLNLLLIE.

This sequence belongs to the lycopene cyclase family. It depends on FAD as a cofactor.

The catalysed reaction is a carotenoid psi-end group = a carotenoid beta-end derivative. It catalyses the reaction all-trans-lycopene = gamma-carotene. It carries out the reaction gamma-carotene = all-trans-beta-carotene. The protein operates within carotenoid biosynthesis; beta-carotene biosynthesis. Functionally, catalyzes the double cyclization reaction which converts lycopene to beta-carotene. In Pseudescherichia vulneris (Escherichia vulneris), this protein is Lycopene beta-cyclase.